Here is a 156-residue protein sequence, read N- to C-terminus: Small ribosomal subunit protein uS7 (156 aa).

In terms of assembly, part of the 30S ribosomal subunit. Contacts proteins S9 and S11. Binds to the C-terminus of IF3 and to the C-terminus of Era.

Its function is as follows. One of the primary rRNA binding proteins, it binds directly to 3'-end of the 16S rRNA where it nucleates assembly of the head domain of the 30S subunit. Is located at the subunit interface close to the decoding center. Binds mRNA and the E site tRNA blocking its exit path in the ribosome. This blockage implies that this section of the ribosome must be able to move to release the deacetylated tRNA. The chain is Small ribosomal subunit protein uS7 (rpsG) from Thermus thermophilus (strain ATCC 27634 / DSM 579 / HB8).